Reading from the N-terminus, the 292-residue chain is uncharacterized protein (292 aa).

A signal peptide spans 1–21 (MNSNSNKKRDPARFPAGVAQG). The tract at residues 1-30 (MNSNSNKKRDPARFPAGVAQGCSTTRAGDL) is disordered.

This is an uncharacterized protein from Treponema pallidum (strain Nichols).